Consider the following 411-residue polypeptide: Glutamate dehydrogenase (411 aa).

Residue lysine 102 is part of the active site.

Belongs to the Glu/Leu/Phe/Val dehydrogenases family.

The catalysed reaction is L-glutamate + NAD(+) + H2O = 2-oxoglutarate + NH4(+) + NADH + H(+). It carries out the reaction L-glutamate + NADP(+) + H2O = 2-oxoglutarate + NH4(+) + NADPH + H(+). The protein is Glutamate dehydrogenase (GDH) of Vitis vinifera (Grape).